Here is a 105-residue protein sequence, read N- to C-terminus: Large ribosomal subunit protein bL21 (105 aa).

This sequence belongs to the bacterial ribosomal protein bL21 family. As to quaternary structure, part of the 50S ribosomal subunit. Contacts protein L20.

Functionally, this protein binds to 23S rRNA in the presence of protein L20. This chain is Large ribosomal subunit protein bL21, found in Rhizobium etli (strain ATCC 51251 / DSM 11541 / JCM 21823 / NBRC 15573 / CFN 42).